A 637-amino-acid chain; its full sequence is Threonine--tRNA ligase (637 aa).

The TGS domain occupies 1–61; it reads MPVITLPNGS…EQDAALSIVT (61 aa). The tract at residues 242-533 is catalytic; the sequence is DHRKLGKKFD…LIENYEGAFP (292 aa). Zn(2+)-binding residues include cysteine 333, histidine 384, and histidine 510.

Belongs to the class-II aminoacyl-tRNA synthetase family. As to quaternary structure, homodimer. Zn(2+) is required as a cofactor.

The protein resides in the cytoplasm. The enzyme catalyses tRNA(Thr) + L-threonine + ATP = L-threonyl-tRNA(Thr) + AMP + diphosphate + H(+). Catalyzes the attachment of threonine to tRNA(Thr) in a two-step reaction: L-threonine is first activated by ATP to form Thr-AMP and then transferred to the acceptor end of tRNA(Thr). Also edits incorrectly charged L-seryl-tRNA(Thr). This chain is Threonine--tRNA ligase, found in Teredinibacter turnerae (strain ATCC 39867 / T7901).